Here is a 305-residue protein sequence, read N- to C-terminus: Epoxyqueuosine reductase (305 aa).

Asp128 acts as the Proton donor in catalysis. Residues 170–202 form the 4Fe-4S ferredoxin-type domain; the sequence is LSLTSDTPHAKYCGTCRKCLDICPTKAIVHPFV. [4Fe-4S] cluster-binding residues include Cys182, Cys185, Cys188, Cys192, Cys208, Cys236, Cys239, and Cys243.

Belongs to the QueG family. Monomer. Requires cob(II)alamin as cofactor. [4Fe-4S] cluster serves as cofactor.

The protein resides in the cytoplasm. It catalyses the reaction epoxyqueuosine(34) in tRNA + AH2 = queuosine(34) in tRNA + A + H2O. Its pathway is tRNA modification; tRNA-queuosine biosynthesis. Catalyzes the conversion of epoxyqueuosine (oQ) to queuosine (Q), which is a hypermodified base found in the wobble positions of tRNA(Asp), tRNA(Asn), tRNA(His) and tRNA(Tyr). The chain is Epoxyqueuosine reductase from Atelocyanobacterium thalassa (isolate ALOHA).